Consider the following 471-residue polypeptide: Coronin-6 (471 aa).

WD repeat units follow at residues 79–119 (GHTG…PVRN), 129–169 (GHSK…VLLS), 173–212 (IHPD…VVAE), 216–259 (PHEG…EPVA), and 264–304 (DTSN…PFVH). Residues 410–433 (ILDVRPPASPRRSQSASEAPLSQH) form a disordered region. Residues 419 to 429 (PRRSQSASEAP) are compositionally biased toward low complexity. Residues 426-468 (SEAPLSQHTLETLLEEIKALRDRVQAQEERITALENMLCELVD) adopt a coiled-coil conformation.

This Mus musculus (Mouse) protein is Coronin-6 (Coro6).